The chain runs to 235 residues: Carboxy-S-adenosyl-L-methionine synthase (235 aa).

S-adenosyl-L-methionine is bound by residues Tyr-35, 60-62, 83-84, Asn-124, and Arg-191; these read GCS and DN.

This sequence belongs to the class I-like SAM-binding methyltransferase superfamily. Cx-SAM synthase family. Homodimer.

The enzyme catalyses prephenate + S-adenosyl-L-methionine = carboxy-S-adenosyl-L-methionine + 3-phenylpyruvate + H2O. Catalyzes the conversion of S-adenosyl-L-methionine (SAM) to carboxy-S-adenosyl-L-methionine (Cx-SAM). This chain is Carboxy-S-adenosyl-L-methionine synthase, found in Campylobacter jejuni subsp. jejuni serotype O:23/36 (strain 81-176).